Here is a 215-residue protein sequence, read N- to C-terminus: Riboflavin synthase (215 aa).

Lumazine-binding repeat units lie at residues 1-96 (MFTG…FGGH) and 97-193 (FVSG…YRFL). 2,4-dihydroxypteridine is bound by residues 4-6 (GIV), 47-49 (CLT), 61-66 (DVMPET), 100-102 (GHV), lysine 135, 144-146 (SST), and 158-163 (SVIPHT).

Homotrimer.

It catalyses the reaction 2 6,7-dimethyl-8-(1-D-ribityl)lumazine + H(+) = 5-amino-6-(D-ribitylamino)uracil + riboflavin. It participates in cofactor biosynthesis; riboflavin biosynthesis; riboflavin from 2-hydroxy-3-oxobutyl phosphate and 5-amino-6-(D-ribitylamino)uracil: step 2/2. Functionally, catalyzes the dismutation of two molecules of 6,7-dimethyl-8-ribityllumazine, resulting in the formation of riboflavin and 5-amino-6-(D-ribitylamino)uracil. This chain is Riboflavin synthase (ribE), found in Bacillus amyloliquefaciens (Bacillus velezensis).